We begin with the raw amino-acid sequence, 440 residues long: Alpha-methylserine aldolase (440 aa).

Lysine 255 carries the post-translational modification N6-(pyridoxal phosphate)lysine.

The protein belongs to the SHMT family. Alpha-methylserine aldolase subfamily. As to quaternary structure, homodimer. It depends on pyridoxal 5'-phosphate as a cofactor.

It carries out the reaction 2-methyl-L-serine = formaldehyde + L-alanine. In terms of biological role, catalyzes the reversible interconversion of alpha-methyl-L-serine to L-alanine and formaldehyde. This Variovorax paradoxus protein is Alpha-methylserine aldolase.